The primary structure comprises 521 residues: Cytochrome P450 monooxygenase 105 (521 aa).

The helical transmembrane segment at 12 to 32 (GVASPATLAVAAVTFLTALVL) threads the bilayer. Residues asparagine 218, asparagine 274, and asparagine 317 are each glycosylated (N-linked (GlcNAc...) asparagine). Cysteine 449 contacts heme.

Belongs to the cytochrome P450 family. It depends on heme as a cofactor.

It is found in the membrane. Its pathway is secondary metabolite biosynthesis. In terms of biological role, cytochrome P450 monooxygenase that is able to use anthracene, carbazole, pyrene, phenanthrene and trans-stilbene as substrates for oxidation. These multifunctional properties against a series of polycyclic aromatic hydrocarbons (PAHs) suggest that CYP105 would play important roles, at least in part, in fungal metabolic systems involved in xenobiotic detoxification. This is Cytochrome P450 monooxygenase 105 from Postia placenta (strain ATCC 44394 / Madison 698-R) (Brown rot fungus).